The sequence spans 247 residues: Cell division protein ZapD (247 aa).

It belongs to the ZapD family. As to quaternary structure, interacts with FtsZ.

The protein resides in the cytoplasm. Functionally, cell division factor that enhances FtsZ-ring assembly. Directly interacts with FtsZ and promotes bundling of FtsZ protofilaments, with a reduction in FtsZ GTPase activity. The chain is Cell division protein ZapD from Escherichia coli O139:H28 (strain E24377A / ETEC).